A 488-amino-acid chain; its full sequence is Eukaryotic translation initiation factor 3 subunit L (488 aa).

2 disordered regions span residues 1–34 (MSLP…YREQ) and 427–449 (SEGG…HGKE). The span at 7 to 16 (QNRDAARRAP) shows a compositional bias: basic and acidic residues. Over residues 17–27 (DDDDDAEEETM) the composition is skewed to acidic residues. A PCI domain is found at 256 to 450 (DAIRMFSHIL…RSRLRHGKEI (195 aa)). The segment covering 431–440 (LLERRGDPQQ) has biased composition (basic and acidic residues).

The protein belongs to the eIF-3 subunit L family. Component of the eukaryotic translation initiation factor 3 (eIF-3) complex.

The protein resides in the cytoplasm. Functionally, component of the eukaryotic translation initiation factor 3 (eIF-3) complex, which is involved in protein synthesis of a specialized repertoire of mRNAs and, together with other initiation factors, stimulates binding of mRNA and methionyl-tRNAi to the 40S ribosome. The eIF-3 complex specifically targets and initiates translation of a subset of mRNAs involved in cell proliferation. In Phaeosphaeria nodorum (strain SN15 / ATCC MYA-4574 / FGSC 10173) (Glume blotch fungus), this protein is Eukaryotic translation initiation factor 3 subunit L.